The following is a 263-amino-acid chain: Small ribosomal subunit protein eS4 (263 aa).

Residues 42–104 form the S4 RNA-binding domain; sequence LPLVIFLRNR…TNELFRLIYD (63 aa).

It belongs to the eukaryotic ribosomal protein eS4 family.

In Spodoptera frugiperda (Fall armyworm), this protein is Small ribosomal subunit protein eS4 (RpS4).